The chain runs to 316 residues: Tyrosine--tRNA ligase 2 (316 aa).

Positions 26, 146, 150, 153, and 168 each coordinate L-tyrosine. The 'KMSKS' region signature appears at 219–223 (KMSKS). Lysine 222 provides a ligand contact to ATP.

Belongs to the class-I aminoacyl-tRNA synthetase family. TyrS type 4 subfamily. Homodimer.

It is found in the cytoplasm. The enzyme catalyses tRNA(Tyr) + L-tyrosine + ATP = L-tyrosyl-tRNA(Tyr) + AMP + diphosphate + H(+). Functionally, catalyzes the attachment of tyrosine to tRNA(Tyr) in a two-step reaction: tyrosine is first activated by ATP to form Tyr-AMP and then transferred to the acceptor end of tRNA(Tyr). The polypeptide is Tyrosine--tRNA ligase 2 (Pyrobaculum aerophilum (strain ATCC 51768 / DSM 7523 / JCM 9630 / CIP 104966 / NBRC 100827 / IM2)).